The primary structure comprises 820 residues: Phenylalanine--tRNA ligase beta subunit (820 aa).

In terms of domain architecture, tRNA-binding spans 42–154 (KGGLEGLVIG…EDAVPGTLAK (113 aa)). Positions 413–489 (AQDFIVELTY…RIYGYNNVEI (77 aa)) constitute a B5 domain. Aspartate 467, aspartate 473, glutamate 476, and aspartate 477 together coordinate Mg(2+). The region spanning 727 to 820 (SKFPAVKRDL…LEDKLGAKLR (94 aa)) is the FDX-ACB domain.

The protein belongs to the phenylalanyl-tRNA synthetase beta subunit family. Type 1 subfamily. Tetramer of two alpha and two beta subunits. Mg(2+) is required as a cofactor.

The protein localises to the cytoplasm. It catalyses the reaction tRNA(Phe) + L-phenylalanine + ATP = L-phenylalanyl-tRNA(Phe) + AMP + diphosphate + H(+). The sequence is that of Phenylalanine--tRNA ligase beta subunit from Bacteroides fragilis (strain ATCC 25285 / DSM 2151 / CCUG 4856 / JCM 11019 / LMG 10263 / NCTC 9343 / Onslow / VPI 2553 / EN-2).